Reading from the N-terminus, the 67-residue chain is uncharacterized protein (67 aa).

This is an uncharacterized protein from Caenorhabditis elegans.